A 215-amino-acid chain; its full sequence is Glycerol-3-phosphate acyltransferase (215 aa).

The next 6 membrane-spanning stretches (helical) occupy residues 3–23 (LILL…LWIG), 42–61 (TNTF…LIDI), 68–90 (TLLP…FAVL), 110–130 (AGVL…VFVL), 134–154 (LFSM…ISVL), and 162–182 (LLPS…AIII).

It belongs to the PlsY family. As to quaternary structure, probably interacts with PlsX.

It localises to the cell membrane. The enzyme catalyses an acyl phosphate + sn-glycerol 3-phosphate = a 1-acyl-sn-glycero-3-phosphate + phosphate. Its pathway is lipid metabolism; phospholipid metabolism. Catalyzes the transfer of an acyl group from acyl-phosphate (acyl-PO(4)) to glycerol-3-phosphate (G3P) to form lysophosphatidic acid (LPA). This enzyme utilizes acyl-phosphate as fatty acyl donor, but not acyl-CoA or acyl-ACP. The protein is Glycerol-3-phosphate acyltransferase of Streptococcus equi subsp. equi (strain 4047).